The sequence spans 599 residues: Elongation factor 4 (599 aa).

Positions 5 to 187 (SHIRNFSIIA…RLVHTIPAPV (183 aa)) constitute a tr-type G domain. Residues 17–22 (DHGKST) and 134–137 (NKMD) contribute to the GTP site.

It belongs to the TRAFAC class translation factor GTPase superfamily. Classic translation factor GTPase family. LepA subfamily.

The protein localises to the cell inner membrane. The catalysed reaction is GTP + H2O = GDP + phosphate + H(+). In terms of biological role, required for accurate and efficient protein synthesis under certain stress conditions. May act as a fidelity factor of the translation reaction, by catalyzing a one-codon backward translocation of tRNAs on improperly translocated ribosomes. Back-translocation proceeds from a post-translocation (POST) complex to a pre-translocation (PRE) complex, thus giving elongation factor G a second chance to translocate the tRNAs correctly. Binds to ribosomes in a GTP-dependent manner. This Pseudomonas putida (strain W619) protein is Elongation factor 4.